Reading from the N-terminus, the 1421-residue chain is Envelopment polyprotein (1421 aa).

The signal sequence occupies residues 1 to 20; sequence MEGSYWWLSLLALLAWGANG. The Lumenal segment spans residues 21 to 479; that stretch reads ESTSPAETSP…CRMSHRPRTC (459 aa). Residues 22 to 31 show a composition bias toward low complexity; it reads STSPAETSPA. The segment at 22-42 is disordered; it reads STSPAETSPAPTTPNPPVVNP. 2 N-linked (GlcNAc...) asparagine; by host glycosylation sites follow: N97 and N346. A helical membrane pass occupies residues 480–500; it reads LALFIWLGAGYGITCIAGYMV. The Cytoplasmic portion of the chain corresponds to 501 to 610; the sequence is YYAILALSML…KLGTLLKRLS (110 aa). A helical transmembrane segment spans residues 611–631; that stretch reads WVTVFLCLFLTAIAPVQGQVT. At 632 to 643 the chain is on the lumenal side; it reads TSPVLPSNQSTE. Residue N639 is glycosylated (N-linked (GlcNAc...) asparagine; by host). Residues 644–664 form a helical membrane-spanning segment; sequence CTLLPPPVFLIFSAVLMSKTL. Topologically, residues 665–708 are cytoplasmic; it reads KRMGPVNKVGAAGHSARRTNSPKNLYKSKQIANTKSGPREPRRR. The helical transmembrane segment at 709 to 729 threads the bilayer; it reads VVVKALLILTASSALQSIHLA. Residues 722–776 constitute a propeptide that is removed on maturation; the sequence is ALQSIHLAQAFDSGSLPEGAWEEEMQLVQGCNQECSLEEDECSCPDGQSMTRKLL. Over 730–1330 the chain is Lumenal; it reads QAFDSGSLPE…GSFFRNYLGS (601 aa). 2 cysteine pairs are disulfide-bonded: C901–C1096 and C929–C934. 2 N-linked (GlcNAc...) asparagine; by host glycosylation sites follow: N1081 and N1299. Residues 1331-1351 form a helical membrane-spanning segment; the sequence is ITLGIVLTLLPVAVVLLFFCY. Residues 1352-1421 lie on the Cytoplasmic side of the membrane; it reads GDKLFKLCSC…GKGKNYKELV (70 aa).

This sequence belongs to the nairovirus envelope glycoprotein family. Heterodimer with glycoprotein C; in prefusion state. As to quaternary structure, heterodimer with glycoprotein N; in prefusion state. Homotrimeric; in postfusion state. In terms of processing, specific enzymatic cleavage by host MBTPS1/S1P/SKI-1 endopeptidase yield glycoprotein N. Specific enzymatic cleavages by host furin-like protease and MBTPS1/S1P endopeptidase yield GP38. Glycosylated.

It is found in the host endoplasmic reticulum membrane. The protein localises to the virion membrane. The protein resides in the host Golgi apparatus membrane. Glycoprotein N and glycoprotein C interact with each other and are present at the surface of the virion. Glycoprotein N probably locks the Gn-Gc complex in a prefusion state. Glycoprotein N and glycoprotein C are able to attach the virion to host cell receptors. This attachment induces virion internalization predominantly through clathrin-dependent endocytosis. In terms of biological role, glycoprotein C and glycoprotein N interact with each other and are present at the surface of the virion. The spikes at the surface of the virion are formed by an N-terminal extension of glycoprotein C. Glycoprotein N and glycoprotein C are able to attach the virion to host cell receptors. This attachment induces virion internalization predominantly through clathrin-dependent endocytosis. Class II fusion protein that promotes fusion of viral membrane with host endosomal membrane after endocytosis of the virion. Exposure to potassium is necessary for the conformational change leading to fusion. This Ixodes protein is Envelopment polyprotein (GP).